Reading from the N-terminus, the 468-residue chain is UDP-N-acetylmuramoyl-L-alanine--L-glutamate ligase (468 aa).

122–128 (GTKGKST) is a binding site for ATP.

It belongs to the MurCDEF family. MurD2 subfamily.

It is found in the cytoplasm. The enzyme catalyses UDP-N-acetyl-alpha-D-muramoyl-L-alanine + L-glutamate + ATP = UDP-N-acetyl-alpha-D-muramoyl-L-alanyl-L-glutamate + ADP + phosphate + H(+). It functions in the pathway cell wall biogenesis; peptidoglycan biosynthesis. Functionally, cell wall formation. Catalyzes the addition of L-glutamate to the nucleotide precursor UDP-N-acetylmuramoyl-L-alanine. This chain is UDP-N-acetylmuramoyl-L-alanine--L-glutamate ligase, found in Xanthomonas axonopodis pv. citri (strain 306).